The following is a 389-amino-acid chain: Growth/differentiation factor 2 (389 aa).

The N-terminal stretch at 1-20 (MWRVGHLLLLMSIVFRITEE) is a signal peptide. Positions 21–280 (KSLGDAGSLE…PVSNRHRRRK (260 aa)) are excised as a propeptide. N-linked (GlcNAc...) asparagine glycosylation is found at Asn65, Asn118, Asn127, and Asn232. The segment covering 263–272 (QQQVGNQAPV) has biased composition (polar residues). The interval 263–284 (QQQVGNQAPVSNRHRRRKRKAK) is disordered. Positions 274-284 (NRHRRRKRKAK) are enriched in basic residues. Intrachain disulfides connect Cys288/Cys354, Cys317/Cys386, and Cys321/Cys388. Asn342 carries an N-linked (GlcNAc...) asparagine glycan.

It belongs to the TGF-beta family. Homodimer; disulfide-linked. In terms of processing, a reversible disulfide bond can be formed between the two subunits in the homodimer; this has no effect on gdf2 activity.

Its subcellular location is the secreted. Potent circulating inhibitor of angiogenesis. Signals through the type I activin receptor ACVRL1 but not other Alks. Signaling through SMAD1 in endothelial cells requires TGF-beta coreceptor endoglin/eng. This is Growth/differentiation factor 2 (gdf2) from Danio rerio (Zebrafish).